Reading from the N-terminus, the 260-residue chain is Putative ABC transporter ATP-binding protein PH0132 (260 aa).

The ABC transporter domain maps to 2-234; the sequence is IEFRDVWFWY…DLEGFGLKEP (233 aa). Residue 34–41 participates in ATP binding; that stretch reads GPNGSGKT.

This sequence belongs to the ABC transporter superfamily.

The protein resides in the cell membrane. Its function is as follows. Probably part of an ABC transporter complex. Responsible for energy coupling to the transport system. The chain is Putative ABC transporter ATP-binding protein PH0132 from Pyrococcus horikoshii (strain ATCC 700860 / DSM 12428 / JCM 9974 / NBRC 100139 / OT-3).